An 86-amino-acid polypeptide reads, in one-letter code: Large ribosomal subunit protein uL23c (86 aa).

It belongs to the universal ribosomal protein uL23 family. In terms of assembly, part of the 50S ribosomal subunit.

It localises to the plastid. The protein resides in the chloroplast. In terms of biological role, binds to 23S rRNA. This is Large ribosomal subunit protein uL23c (rpl23) from Chlorella vulgaris (Green alga).